A 407-amino-acid polypeptide reads, in one-letter code: Peptidase T (407 aa).

H81 contacts Zn(2+). Residue D83 is part of the active site. Residue D142 participates in Zn(2+) binding. Catalysis depends on E176, which acts as the Proton acceptor. Residues E177, D199, and H381 each contribute to the Zn(2+) site.

It belongs to the peptidase M20B family. Zn(2+) is required as a cofactor.

The protein localises to the cytoplasm. The catalysed reaction is Release of the N-terminal residue from a tripeptide.. Functionally, cleaves the N-terminal amino acid of tripeptides. The polypeptide is Peptidase T (Streptococcus pneumoniae (strain ATCC 700669 / Spain 23F-1)).